The primary structure comprises 310 residues: Homoserine kinase (310 aa).

Position 91 to 101 (91 to 101 (PIGSGLGSSAC)) interacts with ATP.

This sequence belongs to the GHMP kinase family. Homoserine kinase subfamily.

It is found in the cytoplasm. It catalyses the reaction L-homoserine + ATP = O-phospho-L-homoserine + ADP + H(+). The protein operates within amino-acid biosynthesis; L-threonine biosynthesis; L-threonine from L-aspartate: step 4/5. Functionally, catalyzes the ATP-dependent phosphorylation of L-homoserine to L-homoserine phosphate. The chain is Homoserine kinase from Sodalis glossinidius (strain morsitans).